A 64-amino-acid chain; its full sequence is Prokaryotic ubiquitin-like protein Pup (64 aa).

Basic and acidic residues-rich tracts occupy residues 1–11 (MAQEQTKRTGG) and 25–34 (GQERREKLAE). Residues 1–38 (MAQEQTKRTGGGDEDEGSAGPEAAGQERREKLAEDTDD) are disordered. Residues 21 to 58 (PEAAGQERREKLAEDTDDLLDEIDDVLEENAEDFVRAY) are ARC ATPase binding. The stretch at 24-52 (AGQERREKLAEDTDDLLDEIDDVLEENAE) forms a coiled coil. Gln64 carries the deamidated glutamine modification. An Isoglutamyl lysine isopeptide (Gln-Lys) (interchain with K-? in acceptor proteins) cross-link involves residue Gln64.

Belongs to the prokaryotic ubiquitin-like protein family. In terms of assembly, strongly interacts with the proteasome-associated ATPase ARC through a hydrophobic interface; the interacting region of Pup lies in its C-terminal half. There is one Pup binding site per ARC hexamer ring. In terms of processing, is modified by deamidation of its C-terminal glutamine to glutamate by the deamidase Dop, a prerequisite to the subsequent pupylation process.

Its pathway is protein degradation; proteasomal Pup-dependent pathway. Its function is as follows. Protein modifier that is covalently attached to lysine residues of substrate proteins, thereby targeting them for proteasomal degradation. The tagging system is termed pupylation. In Nocardia farcinica (strain IFM 10152), this protein is Prokaryotic ubiquitin-like protein Pup.